The chain runs to 125 residues: Small ribosomal subunit protein uS12 (125 aa).

Residues 9–31 (RQGREVEKIKSKSPAMENSPQRR) form a disordered region. A 3-methylthioaspartic acid modification is found at D89.

This sequence belongs to the universal ribosomal protein uS12 family. Part of the 30S ribosomal subunit. Contacts proteins S8 and S17. May interact with IF1 in the 30S initiation complex.

Its function is as follows. With S4 and S5 plays an important role in translational accuracy. In terms of biological role, interacts with and stabilizes bases of the 16S rRNA that are involved in tRNA selection in the A site and with the mRNA backbone. Located at the interface of the 30S and 50S subunits, it traverses the body of the 30S subunit contacting proteins on the other side and probably holding the rRNA structure together. The combined cluster of proteins S8, S12 and S17 appears to hold together the shoulder and platform of the 30S subunit. The protein is Small ribosomal subunit protein uS12 of Verminephrobacter eiseniae (strain EF01-2).